Here is a 450-residue protein sequence, read N- to C-terminus: Divalent metal cation transporter MntH (450 aa).

11 helical membrane passes run 34–54, 61–81, 108–128, 141–161, 170–190, 212–232, 263–283, 305–325, 361–381, 383–403, and 422–442; these read LSFLGPGLLVAVGYMDPGNWI, AQYGYTLLFVILISSLSAMLL, IAIIFWIIAELAIIATDIAEV, IPLIVGALITVLDVFLLLFIM, AIVGTFIFTVLFIFIFEVYIS, GILYIALGIIGATIMPHNLYL, IQLSIAFVVNCLLLVLGASLF, PVLGATMGAIMSTLFAVALLA, SLAVIPVIVCLIIFKGNAAKI, QLLVFSQVFLSIALPFCLIPL, and VNIISWTLIIILSILNVYLIV.

It belongs to the NRAMP family.

It is found in the cell membrane. Functionally, h(+)-stimulated, divalent metal cation uptake system. This Staphylococcus aureus (strain Mu3 / ATCC 700698) protein is Divalent metal cation transporter MntH.